Here is a 651-residue protein sequence, read N- to C-terminus: MQDILGSVRRSLVFRSSLAGDDGTSGGGLSGFVGKINSSIRSSRIGLFSKPPPGLPAPRKEEAPSIRWRKGELIGCGAFGRVYMGMNLDSGELLAIKQVLIAPSSASKEKTQGHIRELEEEVQLLKNLSHPNIVRYLGTVRESDSLNILMEFVPGGSISSLLEKFGSFPEPVIIMYTKQLLLGLEYLHNNGIMHRDIKGANILVDNKGCIRLADFGASKKVVELATVNGAKSMKGTPYWMAPEVILQTGHSFSADIWSVGCTVIEMATGKPPWSEQYQQFAAVLHIGRTKAHPPIPEDLSPEAKDFLMKCLHKEPSLRLSATELLQHPFVTGKRQEPYPAYRNSLTECGNPITTQGMNVRSSINSLIRRSTCSGLKDVCELGSLRSSIIYPQKSNNSGFGWRDGDSDDLCQTDMDDLCNIESVRNNVLSQSTDLNKSFNPMCDSTDNWSCKFDESPKVMKSKSNLLSYQASQLQTGVPCDEETSLTFAGGSSVAEDDYKGTELKIKSFLDEKAQDLKRLQTPLLEEFHNAMNPGIPQGALGDTNIYNLPNLPSISKTPKRLPSRRLSAISDAMPSPLKSSKRTLNTSRVMQSGTEPTQVNESTKKGVNNSRCFSEIRRKWEEELYEELERHRENLRHAGAGGKTPLSGHKG.

The 263-residue stretch at 68–330 (WRKGELIGCG…ATELLQHPFV (263 aa)) folds into the Protein kinase domain. Residues 74-82 (IGCGAFGRV) and Lys97 each bind ATP. A coiled-coil region spans residues 105-130 (SASKEKTQGHIRELEEEVQLLKNLSH). Residues Lys108 and Lys110 each participate in a glycyl lysine isopeptide (Lys-Gly) (interchain with G-Cter in ubiquitin) cross-link. Residue Asp196 is the Proton acceptor of the active site. Residues 573 to 608 (MPSPLKSSKRTLNTSRVMQSGTEPTQVNESTKKGVN) are disordered. Residues 582-608 (RTLNTSRVMQSGTEPTQVNESTKKGVN) show a composition bias toward polar residues. Residues 618–641 (RKWEEELYEELERHRENLRHAGAG) adopt a coiled-coil conformation.

Belongs to the protein kinase superfamily. STE Ser/Thr protein kinase family. MAP kinase kinase kinase subfamily. In terms of assembly, interacts with NACK2 and MKK6. As to expression, expressed in roots and flowers.

Its subcellular location is the cytoplasm. It localises to the cytoskeleton. It catalyses the reaction L-seryl-[protein] + ATP = O-phospho-L-seryl-[protein] + ADP + H(+). The enzyme catalyses L-threonyl-[protein] + ATP = O-phospho-L-threonyl-[protein] + ADP + H(+). Its function is as follows. Involved in cortical microtubules organization and stabilization by regulating the phosphorylation state of microtubule-associated proteins such as MAP65-1. The sequence is that of Mitogen-activated protein kinase kinase kinase 3 (ANP3) from Arabidopsis thaliana (Mouse-ear cress).